The primary structure comprises 464 residues: Juvenile hormone epoxide hydrolase 1 (464 aa).

A helical transmembrane segment spans residues 7-27 (MLIFAAIAGIAVLYYQITKEL). The Nucleophile role is filled by Asp-224. Residue Tyr-370 is the Proton donor of the active site. His-427 serves as the catalytic Proton acceptor.

Belongs to the peptidase S33 family. Developing oocytes, fat body and midgut epithelium of adults.

The protein resides in the microsome membrane. Its subcellular location is the endoplasmic reticulum membrane. The catalysed reaction is cis-stilbene oxide + H2O = (1R,2R)-hydrobenzoin. The enzyme catalyses 1-(4-methoxyphenyl)-N-methyl-N-[(3-methyloxetan-3-yl)methyl]methanamine + H2O = 2-{[(4-methoxybenzyl)(methyl)amino]methyl}-2-methylpropane-1,3-diol. Its function is as follows. Catalyzes juvenile hormone hydrolysis. In Ctenocephalides felis (Cat flea), this protein is Juvenile hormone epoxide hydrolase 1.